A 391-amino-acid chain; its full sequence is MGLQEHPVTPAERQPPVRGGVTIGVEEEFLLVDAASGQLAPHAEAVLAEAANGPLGAPDAVLHAEMLNSQVEAATGCCRTLEELRSQLVAARTSLDRAASVAGARIVSSGTPVLAVEGTGTSNGQRFADIAERYRAVASDYHVCGCHVHVGVPDRDTAVAVVNHLRPWLPTLLAISANSPFHLGHDTGHASWRGVQQRLYPGSGVPPHFPSRDAYDREVARLVDCGALVDDRMSFWMARPSPHLPTVELRVADALITAEETVLQAALSRALVRAALDDLAAGREGDEVSDQVAAAAVWNASRYGLRGPAVDPVPARRVPALEMVERLLRRVGPALEQTGDSALVREALAHVTGVGTGSERQRAAAAAGGPREVVAMLAAATAPGRADRLRT.

This sequence belongs to the glutamate--cysteine ligase type 2 family. YbdK subfamily.

It carries out the reaction L-cysteine + L-glutamate + ATP = gamma-L-glutamyl-L-cysteine + ADP + phosphate + H(+). ATP-dependent carboxylate-amine ligase which exhibits weak glutamate--cysteine ligase activity. The sequence is that of Putative glutamate--cysteine ligase 2-2 from Saccharopolyspora erythraea (strain ATCC 11635 / DSM 40517 / JCM 4748 / NBRC 13426 / NCIMB 8594 / NRRL 2338).